The chain runs to 307 residues: Nicotinamide/nicotinic acid mononucleotide adenylyltransferase 2 (307 aa).

NAD(+) is bound by residues serine 16 and phenylalanine 17. ATP is bound at residue histidine 24. NAD(+) is bound by residues tryptophan 92 and threonine 95. 2 S-palmitoyl cysteine lipidation sites follow: cysteine 164 and cysteine 165. Glycine 200, aspartate 202, leucine 212, tryptophan 213, and arginine 232 together coordinate NAD(+). ATP is bound at residue 271 to 274; that stretch reads TKSR.

It belongs to the eukaryotic NMN adenylyltransferase family. As to quaternary structure, monomer. The cofactor is Mg(2+). Post-translationally, degraded in response to injured neurite. Degradation is caused by polyubiquitination by MYCBP2 after recognition by FBXO45. Palmitoylated; palmitoylation is required for membrane association.

It is found in the golgi apparatus membrane. Its subcellular location is the cytoplasmic vesicle membrane. It localises to the cytoplasm. The protein resides in the cell projection. The protein localises to the axon. The catalysed reaction is beta-nicotinamide D-ribonucleotide + ATP + H(+) = diphosphate + NAD(+). The enzyme catalyses nicotinate beta-D-ribonucleotide + ATP + H(+) = deamido-NAD(+) + diphosphate. The protein operates within cofactor biosynthesis; NAD(+) biosynthesis; NAD(+) from nicotinamide D-ribonucleotide: step 1/1. Its pathway is cofactor biosynthesis; NAD(+) biosynthesis; deamido-NAD(+) from nicotinate D-ribonucleotide: step 1/1. With respect to regulation, inhibited by P1-(adenosine-5')-P3-(nicotinamide-riboside-5')-triphosphate (Np3AD) and P1-(adenosine-5')-P4-(nicotinamide-riboside-5')-tetraphosphate (Np4AD). Its function is as follows. Nicotinamide/nicotinate-nucleotide adenylyltransferase that acts as an axon maintenance factor. Axon survival factor required for the maintenance of healthy axons: acts by delaying Wallerian axon degeneration, an evolutionarily conserved process that drives the loss of damaged axons. Catalyzes the formation of NAD(+) from nicotinamide mononucleotide (NMN) and ATP. Can also use the deamidated form; nicotinic acid mononucleotide (NaMN) as substrate but with a lower efficiency. Cannot use triazofurin monophosphate (TrMP) as substrate. Also catalyzes the reverse reaction, i.e. the pyrophosphorolytic cleavage of NAD(+). For the pyrophosphorolytic activity prefers NAD(+), NADH and NaAD as substrates and degrades nicotinic acid adenine dinucleotide phosphate (NHD) less effectively. Fails to cleave phosphorylated dinucleotides NADP(+), NADPH and NaADP(+). Also acts as an activator of ADP-ribosylation by supporting the catalytic activity of PARP16 and promoting mono-ADP-ribosylation of ribosomes by PARP16. May be involved in the maintenance of axonal integrity. This chain is Nicotinamide/nicotinic acid mononucleotide adenylyltransferase 2 (NMNAT2), found in Bos taurus (Bovine).